A 289-amino-acid chain; its full sequence is Palmitoyl-protein thioesterase 3 (289 aa).

Positions 1–20 (MRILSSLILLIALAIALVSA) are cleaved as a signal peptide. Ser-97 is a catalytic residue. 2 N-linked (GlcNAc...) asparagine glycosylation sites follow: Asn-189 and Asn-195. Residues Asp-210 and His-266 contribute to the active site. N-linked (GlcNAc...) asparagine glycosylation occurs at Asn-281.

The protein belongs to the palmitoyl-protein thioesterase family.

It is found in the lysosome. The enzyme catalyses S-hexadecanoyl-L-cysteinyl-[protein] + H2O = L-cysteinyl-[protein] + hexadecanoate + H(+). In terms of biological role, removes thioester-linked fatty acyl groups such as palmitate from modified cysteine residues in proteins or peptides during lysosomal degradation. The chain is Palmitoyl-protein thioesterase 3 (ppt3) from Dictyostelium discoideum (Social amoeba).